A 326-amino-acid chain; its full sequence is 4-hydroxythreonine-4-phosphate dehydrogenase (326 aa).

2 residues coordinate substrate: histidine 134 and threonine 135. The a divalent metal cation site is built by histidine 164, histidine 209, and histidine 264. Residues lysine 272, asparagine 281, and arginine 290 each contribute to the substrate site.

This sequence belongs to the PdxA family. Homodimer. Zn(2+) is required as a cofactor. It depends on Mg(2+) as a cofactor. Requires Co(2+) as cofactor.

The protein resides in the cytoplasm. The enzyme catalyses 4-(phosphooxy)-L-threonine + NAD(+) = 3-amino-2-oxopropyl phosphate + CO2 + NADH. Its pathway is cofactor biosynthesis; pyridoxine 5'-phosphate biosynthesis; pyridoxine 5'-phosphate from D-erythrose 4-phosphate: step 4/5. Catalyzes the NAD(P)-dependent oxidation of 4-(phosphooxy)-L-threonine (HTP) into 2-amino-3-oxo-4-(phosphooxy)butyric acid which spontaneously decarboxylates to form 3-amino-2-oxopropyl phosphate (AHAP). This is 4-hydroxythreonine-4-phosphate dehydrogenase from Colwellia psychrerythraea (strain 34H / ATCC BAA-681) (Vibrio psychroerythus).